Reading from the N-terminus, the 150-residue chain is Protein Smg homolog (150 aa).

It belongs to the Smg family.

The protein is Protein Smg homolog of Methylibium petroleiphilum (strain ATCC BAA-1232 / LMG 22953 / PM1).